The sequence spans 465 residues: ATP synthase subunit beta (465 aa).

148–155 (GGAGVGKT) is an ATP binding site.

The protein belongs to the ATPase alpha/beta chains family. F-type ATPases have 2 components, CF(1) - the catalytic core - and CF(0) - the membrane proton channel. CF(1) has five subunits: alpha(3), beta(3), gamma(1), delta(1), epsilon(1). CF(0) has three main subunits: a(1), b(2) and c(9-12). The alpha and beta chains form an alternating ring which encloses part of the gamma chain. CF(1) is attached to CF(0) by a central stalk formed by the gamma and epsilon chains, while a peripheral stalk is formed by the delta and b chains.

It is found in the cell inner membrane. It catalyses the reaction ATP + H2O + 4 H(+)(in) = ADP + phosphate + 5 H(+)(out). Produces ATP from ADP in the presence of a proton gradient across the membrane. The catalytic sites are hosted primarily by the beta subunits. This Neisseria meningitidis serogroup A / serotype 4A (strain DSM 15465 / Z2491) protein is ATP synthase subunit beta.